A 432-amino-acid chain; its full sequence is 3-phosphoshikimate 1-carboxyvinyltransferase (432 aa).

The 3-phosphoshikimate site is built by lysine 22, serine 23, and arginine 27. Position 22 (lysine 22) interacts with phosphoenolpyruvate. Phosphoenolpyruvate-binding residues include glycine 96 and arginine 127. 3-phosphoshikimate is bound by residues serine 173, serine 174, glutamine 175, serine 201, aspartate 316, asparagine 339, and lysine 343. Glutamine 175 is a phosphoenolpyruvate binding site. The active-site Proton acceptor is the aspartate 316. Residues arginine 347, arginine 391, and lysine 416 each contribute to the phosphoenolpyruvate site.

The protein belongs to the EPSP synthase family. Monomer.

The protein localises to the cytoplasm. It catalyses the reaction 3-phosphoshikimate + phosphoenolpyruvate = 5-O-(1-carboxyvinyl)-3-phosphoshikimate + phosphate. Its pathway is metabolic intermediate biosynthesis; chorismate biosynthesis; chorismate from D-erythrose 4-phosphate and phosphoenolpyruvate: step 6/7. Catalyzes the transfer of the enolpyruvyl moiety of phosphoenolpyruvate (PEP) to the 5-hydroxyl of shikimate-3-phosphate (S3P) to produce enolpyruvyl shikimate-3-phosphate and inorganic phosphate. This chain is 3-phosphoshikimate 1-carboxyvinyltransferase, found in Actinobacillus pleuropneumoniae serotype 5b (strain L20).